The sequence spans 60 residues: UPF0181 protein ESA_01442 (60 aa).

This sequence belongs to the UPF0181 family.

This is UPF0181 protein ESA_01442 from Cronobacter sakazakii (strain ATCC BAA-894) (Enterobacter sakazakii).